Consider the following 139-residue polypeptide: MSISSALAMVFMGAKGNTAAQMSQALCFSKIGGEDGDIHRGFQSLLVAINRTDTEYVLRTANGLFGEKSYDFLTGFTDSCGKFYQATIKQLDFVNDTEKSTTRVNSWVADKTKGENILLFYFDNILNSFIVSSLQNCQI.

The first 20 residues, 1–20 (MSISSALAMVFMGAKGNTAA), serve as a signal peptide directing secretion. Residue asparagine 50 is glycosylated (N-linked (GlcNAc...) asparagine).

This sequence belongs to the serpin family. As to expression, highly expressed in dendritic cells and primary leukemia cells, especially those of myeloid lineage.

It localises to the secreted. Its function is as follows. Putative serine protease inhibitor. This is Serpin-like protein HMSD (HMSD) from Homo sapiens (Human).